The sequence spans 218 residues: Large ribosomal subunit protein eL14 (218 aa).

Lysine 79 bears the N6-acetyllysine mark. An N6-acetyllysine; alternate modification is found at lysine 85. The residue at position 85 (lysine 85) is an N6-succinyllysine; alternate. A Glycyl lysine isopeptide (Lys-Gly) (interchain with G-Cter in SUMO2) cross-link involves residue lysine 124. The residue at position 139 (serine 139) is a Phosphoserine. Residues 159 to 218 (VPAKKATAAGKKAAAQKAPAQKAPAQKAAGQKAAQPPKAQKGQKPPAQKAPAPKASGKKA) form a disordered region. 6 consecutive repeat copies span residues 174-178 (QKAPA), 179-183 (QKAPA), 184-188 (QKAAG), 189-193 (QKAAQ), 196-198 (KAQ), and 199-201 (KGQ). The 4 X 5 AA tandem repeats of Q-K-A-[PAS]-X stretch occupies residues 174–193 (QKAPAQKAPAQKAAGQKAAQ). Positions 196-201 (KAQKGQ) are 2 X 3 AA tandem repeats of K-[GA]-Q. Residue lysine 207 is modified to N6-succinyllysine.

Belongs to the eukaryotic ribosomal protein eL14 family. Component of the large ribosomal subunit.

The protein resides in the cytoplasm. In terms of biological role, component of the large ribosomal subunit. The ribosome is a large ribonucleoprotein complex responsible for the synthesis of proteins in the cell. This Oryctolagus cuniculus (Rabbit) protein is Large ribosomal subunit protein eL14 (RPL14).